The following is a 71-amino-acid chain: MKIPLILVTIAIILLMVPTESDAFDLGGLIKGVVDLFGRRSLKNRDYFDYMQDPSLSNADLRELEELLEDY.

The signal sequence occupies residues Met1–Ala23. Position 37 is a phenylalanine amide (Phe37). Positions Ser41–Tyr71 are excised as a propeptide.

The protein belongs to the non-disulfide-bridged peptide (NDBP) superfamily. Short antimicrobial peptide (group 4) family. Expressed by the venom gland.

The protein localises to the secreted. In terms of biological role, antimicrobial peptide. This chain is Peptide Ctri10261, found in Chaerilus tricostatus (Scorpion).